The sequence spans 240 residues: 7-cyano-7-deazaguanine synthase (240 aa).

9–19 contributes to the ATP binding site; it reads FSGGLDSTACL. Positions 195, 210, 213, and 216 each coordinate Zn(2+).

The protein belongs to the QueC family. Zn(2+) serves as cofactor.

It carries out the reaction 7-carboxy-7-deazaguanine + NH4(+) + ATP = 7-cyano-7-deazaguanine + ADP + phosphate + H2O + H(+). It functions in the pathway purine metabolism; 7-cyano-7-deazaguanine biosynthesis. In terms of biological role, catalyzes the ATP-dependent conversion of 7-carboxy-7-deazaguanine (CDG) to 7-cyano-7-deazaguanine (preQ(0)). This chain is 7-cyano-7-deazaguanine synthase, found in Pyrococcus furiosus (strain ATCC 43587 / DSM 3638 / JCM 8422 / Vc1).